The sequence spans 192 residues: Apoptosis regulator BAX (192 aa).

Position 1 is an N-acetylmethionine (M1). The short motif at 59 to 73 (LSECLRRIGDELDSN) is the BH3 element. The short motif at 98–118 (DMFADGNFNWGRVVALFYFAS) is the BH1 element. K128 is covalently cross-linked (Glycyl lysine isopeptide (Lys-Gly) (interchain with G-Cter in ubiquitin)). Residues 150-165 (VWIQDQGGWEGLLSYF) carry the BH2 motif. The helical transmembrane segment at 172-192 (TVTIFVAGVLTASLTIWKKMG) threads the bilayer. Residue K190 forms a Glycyl lysine isopeptide (Lys-Gly) (interchain with G-Cter in ubiquitin) linkage.

It belongs to the Bcl-2 family. As to quaternary structure, homodimer. Forms higher oligomers under stress conditions. Forms heterooligomers with BAK. Interacts with BCL2L11. Interaction with BCL2L11 promotes BAX oligomerization and association with mitochondrial membranes, with subsequent release of cytochrome c. Forms heterodimers with BCL2. Forms heterodimers with BCL2L1 isoform Bcl-X(L), BCL2L2, MCL1 and A1. Interacts with SH3GLB1. Interacts with SFN and YWHAZ; the interaction occurs in the cytoplasm. Under stress conditions, JNK-mediated phosphorylation of SFN and YWHAZ, releases BAX to mitochondria. Interacts with RNF144B, which regulates the ubiquitin-dependent stability of BAX. Interacts with CLU under stress conditions that cause a conformation change leading to BAX oligomerization and association with mitochondria. Does not interact with CLU in unstressed cells. Interacts with FAIM2/LFG2. Interacts with BOP. Interacts (via a C-terminal 33 residues) with NOL3 (via CARD domain); inhibits BAX activation and translocationand consequently cytochrome c release from mitochondria. Interacts with GIMAP3/IAN4 and GIMAP5/IAN5; this interaction is increased, when cells initiate apoptosis upon IL2 withdrawal. Interacts with IRF3; the interaction is direct and, upon virus infection, mediates the formation of the apoptosis complex TOMM70:HSP90AA1:IRF3:BAX. Interacts with MOAP1, facilitating BAX-dependent mitochondrial outer membrane permeabilization and apoptosis. Interacts with BCL2L10/BCL-B. Interacts with non-acetylated XRCC6/Ku70; this interaction leads to BAX sequestration in the cytosol, away from the mitochondria, preventing BAX-mediated apoptosis. (Microbial infection) Interacts with gamma-herpesvirus 68 protein vBCL2. Ubiquitinated in the absence of XRCC6/Ku70. Ubiquitinated on Lys-128 and Lys-190. 'Lys-63'-linked polyubiquitin chains on Lys-128 are removed by USP12. In terms of tissue distribution, expressed in a wide variety of tissues.

Its subcellular location is the mitochondrion outer membrane. It is found in the cytoplasm. The protein resides in the nucleus. Functionally, accelerates programmed cell death by binding to, and antagonizing the apoptosis repressor BCL2 or its adenovirus homolog E1B 19k protein. Under stress conditions, undergoes a conformation change that causes translocation to the mitochondrion membrane, leading to the release of cytochrome c that then triggers apoptosis. Promotes activation of CASP3, and thereby apoptosis. BAX deficiency leads to lymphoid hyperplasia and male sterility, because of the cessation of sperm production. In Mus musculus (Mouse), this protein is Apoptosis regulator BAX (Bax).